The chain runs to 224 residues: Orotate phosphoribosyltransferase (224 aa).

5-phospho-alpha-D-ribose 1-diphosphate is bound by residues Lys26, 73-74 (YK), Arg100, Lys101, Lys104, His106, and 127-135 (EDVTTAGTS). The orotate site is built by Thr131 and Arg160.

This sequence belongs to the purine/pyrimidine phosphoribosyltransferase family. PyrE subfamily. In terms of assembly, homodimer. The cofactor is Mg(2+).

It carries out the reaction orotidine 5'-phosphate + diphosphate = orotate + 5-phospho-alpha-D-ribose 1-diphosphate. It participates in pyrimidine metabolism; UMP biosynthesis via de novo pathway; UMP from orotate: step 1/2. Catalyzes the transfer of a ribosyl phosphate group from 5-phosphoribose 1-diphosphate to orotate, leading to the formation of orotidine monophosphate (OMP). The protein is Orotate phosphoribosyltransferase of Clostridium beijerinckii (strain ATCC 51743 / NCIMB 8052) (Clostridium acetobutylicum).